Consider the following 426-residue polypeptide: Putative glutamate--cysteine ligase 2 (426 aa).

Belongs to the glutamate--cysteine ligase type 2 family. YbdK subfamily.

The enzyme catalyses L-cysteine + L-glutamate + ATP = gamma-L-glutamyl-L-cysteine + ADP + phosphate + H(+). Its function is as follows. ATP-dependent carboxylate-amine ligase which exhibits weak glutamate--cysteine ligase activity. This is Putative glutamate--cysteine ligase 2 from Bradyrhizobium diazoefficiens (strain JCM 10833 / BCRC 13528 / IAM 13628 / NBRC 14792 / USDA 110).